The following is a 704-amino-acid chain: Polyribonucleotide nucleotidyltransferase (704 aa).

Mg(2+) is bound by residues Asp488 and Asp494. The KH domain maps to 555–614 (PRITTIKINPEKIRDVIGKGGATIRALTEETGTTIELDDDGTVKIASSNGEATKEAIRRI). Positions 624–692 (GTVYNGKVVR…RQGRVRLSMK (69 aa)) constitute an S1 motif domain.

It belongs to the polyribonucleotide nucleotidyltransferase family. In terms of assembly, component of the RNA degradosome, which is a multiprotein complex involved in RNA processing and mRNA degradation. Mg(2+) serves as cofactor.

It is found in the cytoplasm. The catalysed reaction is RNA(n+1) + phosphate = RNA(n) + a ribonucleoside 5'-diphosphate. Involved in mRNA degradation. Catalyzes the phosphorolysis of single-stranded polyribonucleotides processively in the 3'- to 5'-direction. The sequence is that of Polyribonucleotide nucleotidyltransferase from Shewanella pealeana (strain ATCC 700345 / ANG-SQ1).